The following is a 377-amino-acid chain: Queuine tRNA-ribosyltransferase (377 aa).

The Proton acceptor role is filled by Asp-89. Substrate contacts are provided by residues 89 to 93 (DSGGF), Asp-143, Gln-187, and Gly-214. The interval 245-251 (GVGKPED) is RNA binding. Asp-264 (nucleophile) is an active-site residue. The interval 269–273 (TRNAR) is RNA binding; important for wobble base 34 recognition. Residues Cys-302, Cys-304, Cys-307, and His-333 each contribute to the Zn(2+) site.

Belongs to the queuine tRNA-ribosyltransferase family. In terms of assembly, homodimer. Within each dimer, one monomer is responsible for RNA recognition and catalysis, while the other monomer binds to the replacement base PreQ1. The cofactor is Zn(2+).

It carries out the reaction 7-aminomethyl-7-carbaguanine + guanosine(34) in tRNA = 7-aminomethyl-7-carbaguanosine(34) in tRNA + guanine. It participates in tRNA modification; tRNA-queuosine biosynthesis. In terms of biological role, catalyzes the base-exchange of a guanine (G) residue with the queuine precursor 7-aminomethyl-7-deazaguanine (PreQ1) at position 34 (anticodon wobble position) in tRNAs with GU(N) anticodons (tRNA-Asp, -Asn, -His and -Tyr). Catalysis occurs through a double-displacement mechanism. The nucleophile active site attacks the C1' of nucleotide 34 to detach the guanine base from the RNA, forming a covalent enzyme-RNA intermediate. The proton acceptor active site deprotonates the incoming PreQ1, allowing a nucleophilic attack on the C1' of the ribose to form the product. After dissociation, two additional enzymatic reactions on the tRNA convert PreQ1 to queuine (Q), resulting in the hypermodified nucleoside queuosine (7-(((4,5-cis-dihydroxy-2-cyclopenten-1-yl)amino)methyl)-7-deazaguanosine). The sequence is that of Queuine tRNA-ribosyltransferase from Shewanella sediminis (strain HAW-EB3).